The following is a 49-amino-acid chain: Large ribosomal subunit protein bL33 (49 aa).

The protein belongs to the bacterial ribosomal protein bL33 family.

The sequence is that of Large ribosomal subunit protein bL33 from Desulforudis audaxviator (strain MP104C).